The sequence spans 1128 residues: Apoptosis-stimulating of p53 protein 2 (1128 aa).

Disordered regions lie at residues 86 to 106 (PGRD…RNGV) and 322 to 341 (KENL…ASAP). Positions 322-339 (KENLPVSSDGNLPQQAAS) are enriched in polar residues. The interval 332 to 348 (NLPQQAASAPSRVAAVG) is interaction with APPBP1. The residue at position 480 (Ser480) is a Phosphoserine. 2 disordered regions span residues 494-598 (NVAK…LPPF) and 655-706 (NQQQ…LPFL). Polar residues predominate over residues 528 to 537 (GSSQQLSTVV). 4 positions are modified to phosphoserine: Ser556, Ser569, Ser572, and Ser576. Positions 558 to 575 (SIPSVGQDQTLSPGSKQE) are enriched in polar residues. Positions 655 to 670 (NQQQHPENIYSNSQGK) are enriched in polar residues. Phosphoserine is present on residues Ser698, Ser714, and Ser737. Disordered regions lie at residues 724-748 (KLSN…NGPN) and 802-909 (SLVP…TNLR). Residues 840–849 (NSPNLQNNPE) show a composition bias toward low complexity. Residues 866–875 (YPPYPPPPYP) carry the SH3-binding motif. A compositionally biased stretch (pro residues) spans 867 to 876 (PPYPPPPYPS). The tract at residues 876–1128 (SGEPEGPGED…RIKPRQRSLA (253 aa)) is mediates interaction with APC2. ANK repeat units lie at residues 926-957 (PLAL…LPND), 958-990 (EGIT…AADS), 991-1024 (DGWT…MTYS), and 1025-1067 (DMQT…ALWD). The SH3 domain maps to 1057–1119 (MNKGVIYALW…PRNLLGLYPR (63 aa)).

Belongs to the ASPP family. As to quaternary structure, interacts with P53/TP53; the interaction promotes pro-apoptotic activity. Interacts with BCL2. Interacts with protein phosphatase 1. Interacts with RELA NF-kappa-B subunit. This interaction probably prevents the activation of apoptosis, possibly by preventing its interaction with TP53. Interacts with APC2 and NAE1. Interacts with DDX42 (via the C-terminus); the interaction is not inhibited by TP53BP2 ubiquitination and is independent of p53/TP53. Widely expressed. Expressed in spleen, thymus, prostate, testis, ovary, small intestine, colon and peripheral blood leukocyte. Reduced expression in breast carcinomas expressing a wild-type TP53 protein. Overexpressed in lung cancer cell lines.

It is found in the cytoplasm. It localises to the perinuclear region. Its subcellular location is the nucleus. Its function is as follows. Regulator that plays a central role in regulation of apoptosis and cell growth via its interactions with proteins such as TP53. Regulates TP53 by enhancing the DNA binding and transactivation function of TP53 on the promoters of proapoptotic genes in vivo. Inhibits the ability of NAE1 to conjugate NEDD8 to CUL1, and thereby decreases NAE1 ability to induce apoptosis. Impedes cell cycle progression at G2/M. Its apoptosis-stimulating activity is inhibited by its interaction with DDX42. This Homo sapiens (Human) protein is Apoptosis-stimulating of p53 protein 2 (TP53BP2).